We begin with the raw amino-acid sequence, 308 residues long: Carnitine transport binding protein OpuCC (308 aa).

The N-terminal stretch at 1–22 (MKKKFIALFSVLLLTSSLFLSS) is a signal peptide. C23 carries N-palmitoyl cysteine lipidation. C23 is lipidated: S-diacylglycerol cysteine.

The protein belongs to the OsmX family. The complex is composed of two ATP-binding proteins (OpuCA), two transmembrane proteins (OpuCB and OpuCD) and a solute-binding protein (OpuCC).

The protein localises to the cell membrane. Part of the ABC transporter complex OpuCABCD involved in carnitine uptake. Involved, with BetL and GbuABC, in osmoprotection and cryoprotection of Listeria. Can also mediate weak glycine betaine transport. The sequence is that of Carnitine transport binding protein OpuCC (opuCC) from Listeria monocytogenes serotype 1/2a (strain 10403S).